Here is a 349-residue protein sequence, read N- to C-terminus: Alanine racemase (349 aa).

The active-site Proton acceptor; specific for D-alanine is Lys-35. Lys-35 carries the post-translational modification N6-(pyridoxal phosphate)lysine. Arg-130 contacts substrate. Tyr-244 (proton acceptor; specific for L-alanine) is an active-site residue. Residue Met-292 participates in substrate binding.

This sequence belongs to the alanine racemase family. The cofactor is pyridoxal 5'-phosphate.

The catalysed reaction is L-alanine = D-alanine. It participates in amino-acid biosynthesis; D-alanine biosynthesis; D-alanine from L-alanine: step 1/1. Its function is as follows. Catalyzes the interconversion of L-alanine and D-alanine. May also act on other amino acids. This chain is Alanine racemase (alr), found in Dinoroseobacter shibae (strain DSM 16493 / NCIMB 14021 / DFL 12).